A 602-amino-acid chain; its full sequence is (R)-limonene synthase (602 aa).

Residues Asp-356, Asp-360, Asp-500, Thr-504, and Glu-508 each contribute to the Mg(2+) site. The DDXXD motif motif lies at 356 to 360; the sequence is DDVYD.

This sequence belongs to the terpene synthase family. Requires Mg(2+) as cofactor. The cofactor is Mn(2+).

The enzyme catalyses (2E)-geranyl diphosphate = (4R)-limonene + diphosphate. In terms of biological role, catalyzes the formation of (R)-(+)-limonene, terpinolene, (1R,5S)-(+)-camphene, (1R,5R)-(+)-alpha-pinene, beta-myrcene and traces of alpha-phellandrene. This Lavandula angustifolia (Lavender) protein is (R)-limonene synthase.